Reading from the N-terminus, the 212-residue chain is Dephospho-CoA kinase (212 aa).

In terms of domain architecture, DPCK spans 3–207; that stretch reads IIGLTGGIAS…RHLADDPEPG (205 aa). Residue 11-16 coordinates ATP; that stretch reads ASGKST.

The protein belongs to the CoaE family.

The protein localises to the cytoplasm. The catalysed reaction is 3'-dephospho-CoA + ATP = ADP + CoA + H(+). It participates in cofactor biosynthesis; coenzyme A biosynthesis; CoA from (R)-pantothenate: step 5/5. In terms of biological role, catalyzes the phosphorylation of the 3'-hydroxyl group of dephosphocoenzyme A to form coenzyme A. This chain is Dephospho-CoA kinase, found in Moorella thermoacetica (strain ATCC 39073 / JCM 9320).